Reading from the N-terminus, the 264-residue chain is Glutamate racemase (264 aa).

Substrate contacts are provided by residues 10–11 (DS) and 42–43 (YG). The active-site Proton donor/acceptor is C73. 74 to 75 (NT) contacts substrate. The active-site Proton donor/acceptor is C181. 182 to 183 (TH) contacts substrate.

It belongs to the aspartate/glutamate racemases family.

It catalyses the reaction L-glutamate = D-glutamate. It functions in the pathway cell wall biogenesis; peptidoglycan biosynthesis. Provides the (R)-glutamate required for cell wall biosynthesis. The polypeptide is Glutamate racemase (Thermoanaerobacter pseudethanolicus (strain ATCC 33223 / 39E) (Clostridium thermohydrosulfuricum)).